A 215-amino-acid polypeptide reads, in one-letter code: Outer-membrane lipoprotein LolB (215 aa).

Residues methionine 1 to glycine 19 form the signal peptide. Residue cysteine 20 is the site of N-palmitoyl cysteine attachment. Cysteine 20 is lipidated: S-diacylglycerol cysteine.

This sequence belongs to the LolB family. As to quaternary structure, monomer.

It localises to the cell outer membrane. Plays a critical role in the incorporation of lipoproteins in the outer membrane after they are released by the LolA protein. The protein is Outer-membrane lipoprotein LolB of Vibrio atlanticus (strain LGP32) (Vibrio splendidus (strain Mel32)).